The primary structure comprises 464 residues: Interstitial collagenase A (464 aa).

Positions 1 to 17 (MPSLPLLLLLWAASSYS) are cleaved as a signal peptide. A propeptide spans 18–96 (FPVFHNGDRQ…PRCGVPDVAP (79 aa)) (activation peptide). Positions 87–94 (PRCGVPDV) match the Cysteine switch motif. Cys89 contributes to the Zn(2+) binding site. The segment at 95–274 (APYAITHNNP…IQPTGATTPH (180 aa)) is metalloprotease. Asp155 is a Ca(2+) binding site. Zn(2+) contacts are provided by His165 and Asp167. Residues Asp172 and Gly173 each contribute to the Ca(2+) site. Position 180 (His180) interacts with Zn(2+). Residues Gly187, Gly189, and Asp191 each coordinate Ca(2+). Zn(2+) is bound at residue His193. Ca(2+) contacts are provided by Asp195 and Glu198. Asn202 carries N-linked (GlcNAc...) asparagine glycosylation. His215 is a binding site for Zn(2+). Glu216 is an active-site residue. Zn(2+) contacts are provided by His219 and His225. Hemopexin repeat units lie at residues 273-322 (PHPC…WPNL) and 323-369 (PVKL…FGFP). Cys276 and Cys464 are oxidised to a cystine. Asp283 is a binding site for Ca(2+). Asn371 carries N-linked (GlcNAc...) asparagine glycosylation. Hemopexin repeat units follow at residues 372–420 (VTHI…FPGI) and 421–464 (DDKV…WFNC). Asp376 and Asp425 together coordinate Ca(2+).

Belongs to the peptidase M10A family. Ca(2+) is required as a cofactor. Requires Zn(2+) as cofactor.

Its subcellular location is the secreted. The protein resides in the extracellular space. It localises to the extracellular matrix. It catalyses the reaction Cleavage of the triple helix of collagen at about three-quarters of the length of the molecule from the N-terminus, at 775-Gly-|-Ile-776 in the alpha1(I) chain. Cleaves synthetic substrates and alpha-macroglobulins at bonds where P1' is a hydrophobic residue.. Its activity is regulated as follows. Can be activated without removal of the activation peptide. Cleaves collagens of types I, II, and III at one site in the helical domain. Also cleaves collagens of types VII and X. Able to degrade synthetic peptides and type I and II fibrillar collagen. The polypeptide is Interstitial collagenase A (Mmp1a) (Mus musculus (Mouse)).